The sequence spans 347 residues: E3 ubiquitin-protein ligase ARK2C (347 aa).

Disordered regions lie at residues 23-79 (PFQR…GTLH) and 268-289 (PHKYKKRRPQDSKGKKDEGEES). The interval 267–269 (FPH) is ubiquitin binding. Residues 276 to 285 (PQDSKGKKDE) are compositionally biased toward basic and acidic residues. Residues Cys295 and Cys298 each coordinate Zn(2+). Residues 295 to 336 (CTICLSMLEDGEDVRRLPCMHLFHQLCVDQWLAMSKKCPICR) form an RING-type; atypical zinc finger. Residues 310 to 314 (RLPCM) are ubiquitin binding. The Zn(2+) site is built by His318 and Cys321.

It belongs to the Arkadia family. In terms of assembly, monomer; binding to the ubiquitin-conjugating enzyme E2 does not trigger homodimerization. As to expression, expressed in neurons of the nervous system.

The protein localises to the nucleus. It carries out the reaction S-ubiquitinyl-[E2 ubiquitin-conjugating enzyme]-L-cysteine + [acceptor protein]-L-lysine = [E2 ubiquitin-conjugating enzyme]-L-cysteine + N(6)-ubiquitinyl-[acceptor protein]-L-lysine.. Its activity is regulated as follows. Binds free ubiquitin non-covalently via its RING-type zinc finger. Ubiquitin-binding leads to enhance the E3 ubiquitin-protein ligase activity by stabilizing the ubiquitin-conjugating enzyme E2 (donor ubiquitin) in the 'closed' conformation and activating ubiquitin transfer. Functionally, E3 ubiquitin-protein ligase that acts as a regulator of motor axon elongation. Required for efficient motor axon extension in the dorsal forelimb by enhancing the transcriptional responses of the SMAD1/SMAD5/SMAD8 effectors, which are activated downstream of BMP. Acts by mediating ubiquitination and degradation of SMAD inhibitors such as SMAD6, SMAD7, SKI and SNON isoform of SKIL. This chain is E3 ubiquitin-protein ligase ARK2C, found in Mus musculus (Mouse).